Reading from the N-terminus, the 207-residue chain is Small ribosomal subunit protein uS4 (207 aa).

The segment at 30–54 (DKCKLDSKPGQHGRTSGARTSDYGN) is disordered. A compositionally biased stretch (polar residues) spans 42–53 (GRTSGARTSDYG). Positions 97–160 (SRLDNVVYRM…KKQVRIAEAL (64 aa)) constitute an S4 RNA-binding domain.

Belongs to the universal ribosomal protein uS4 family. Part of the 30S ribosomal subunit. Contacts protein S5. The interaction surface between S4 and S5 is involved in control of translational fidelity.

Functionally, one of the primary rRNA binding proteins, it binds directly to 16S rRNA where it nucleates assembly of the body of the 30S subunit. With S5 and S12 plays an important role in translational accuracy. The protein is Small ribosomal subunit protein uS4 of Cupriavidus taiwanensis (strain DSM 17343 / BCRC 17206 / CCUG 44338 / CIP 107171 / LMG 19424 / R1) (Ralstonia taiwanensis (strain LMG 19424)).